The sequence spans 286 residues: Release factor glutamine methyltransferase (286 aa).

S-adenosyl-L-methionine contacts are provided by residues 122–126 (GTGTG), Asp-145, Trp-173, and Asn-188. Residue 188-191 (NPPY) participates in substrate binding.

The protein belongs to the protein N5-glutamine methyltransferase family. PrmC subfamily.

It catalyses the reaction L-glutaminyl-[peptide chain release factor] + S-adenosyl-L-methionine = N(5)-methyl-L-glutaminyl-[peptide chain release factor] + S-adenosyl-L-homocysteine + H(+). Its function is as follows. Methylates the class 1 translation termination release factors RF1/PrfA and RF2/PrfB on the glutamine residue of the universally conserved GGQ motif. The protein is Release factor glutamine methyltransferase of Shewanella oneidensis (strain ATCC 700550 / JCM 31522 / CIP 106686 / LMG 19005 / NCIMB 14063 / MR-1).